A 101-amino-acid chain; its full sequence is Protein translation factor SUI1 homolog (101 aa).

The protein belongs to the SUI1 family.

The chain is Protein translation factor SUI1 homolog from Aeropyrum pernix (strain ATCC 700893 / DSM 11879 / JCM 9820 / NBRC 100138 / K1).